Consider the following 188-residue polypeptide: Putative manganese efflux pump MntP (188 aa).

6 consecutive transmembrane segments (helical) span residues 3–23, 39–59, 65–85, 104–124, 125–145, and 167–187; these read MITL…VALG, LGWH…LAGL, IETY…GKMI, GMSL…VGLS, LAIV…IAGV, and IAGG…HTLG.

This sequence belongs to the MntP (TC 9.B.29) family.

It localises to the cell inner membrane. Its function is as follows. Probably functions as a manganese efflux pump. This Syntrophotalea carbinolica (strain DSM 2380 / NBRC 103641 / GraBd1) (Pelobacter carbinolicus) protein is Putative manganese efflux pump MntP.